The chain runs to 137 residues: Protein FrxA (137 aa).

The sequence is that of Protein FrxA (frxA) from Pyrococcus furiosus (strain ATCC 43587 / DSM 3638 / JCM 8422 / Vc1).